The sequence spans 182 residues: ADP-ribosylation factor-like protein 3 (182 aa).

Glycine 2 carries N-myristoyl glycine lipidation. The residue at position 5 (serine 5) is a Phosphoserine. GTP contacts are provided by residues 24 to 31 (GLDNAGKT), threonine 48, 67 to 71 (DIGGQ), glycine 70, 126 to 129 (NKQD), and 159 to 161 (SAL). Mg(2+) contacts are provided by threonine 31 and threonine 48.

It belongs to the small GTPase superfamily. Arf family. In terms of assembly, found in a complex with ARL3, RP2 and UNC119 (or UNC119B); RP2 induces hydrolysis of GTP ARL3 in the complex, leading to the release of UNC119 (or UNC119B). Interacts with RP2; interaction is direct and stimulated with the activated GTP-bound form of ARL3. Interacts with SYS1. Interacts with ARL2BP; the GTP-bound form interacts with ARL2BP. Microtubule-associated protein. Does not interact with TBCC. Interacts with RP2. Interacts with PDE6D; the interaction occurs specifically with the GTP-bound form of ARL3. Interacts with GGA1; the interaction recruits PKD1:PKD2 complex to trans-Golgi network and is required for ciliary targeting of PKD1:PKD2 complex. Interacts with DNAAF9.

It localises to the golgi apparatus membrane. The protein localises to the cytoplasm. The protein resides in the cytoskeleton. It is found in the spindle. Its subcellular location is the nucleus. It localises to the microtubule organizing center. The protein localises to the centrosome. The protein resides in the cell projection. It is found in the cilium. Its function is as follows. Small GTP-binding protein which cycles between an inactive GDP-bound and an active GTP-bound form, and the rate of cycling is regulated by guanine nucleotide exchange factors (GEF) and GTPase-activating proteins (GAP). Required for normal cytokinesis and cilia signaling. Requires assistance from GTPase-activating proteins (GAPs) like RP2 and PDE6D, in order to cycle between inactive GDP-bound and active GTP-bound forms. Required for targeting proteins to the cilium, including myristoylated NPHP3 and prenylated INPP5E. Targets NPHP3 to the ciliary membrane by releasing myristoylated NPHP3 from UNC119B cargo adapter into the cilium. Required for PKD1:PKD2 complex targeting from the trans-Golgi network to the cilium. The protein is ADP-ribosylation factor-like protein 3 (Arl3) of Rattus norvegicus (Rat).